Here is a 332-residue protein sequence, read N- to C-terminus: CRISPR-associated endonuclease Cas1 3 (332 aa).

Glutamate 159, histidine 224, and glutamate 239 together coordinate Mn(2+).

Belongs to the CRISPR-associated endonuclease Cas1 family. As to quaternary structure, homodimer, forms a heterotetramer with a Cas2 homodimer. Mg(2+) is required as a cofactor. It depends on Mn(2+) as a cofactor.

CRISPR (clustered regularly interspaced short palindromic repeat), is an adaptive immune system that provides protection against mobile genetic elements (viruses, transposable elements and conjugative plasmids). CRISPR clusters contain spacers, sequences complementary to antecedent mobile elements, and target invading nucleic acids. CRISPR clusters are transcribed and processed into CRISPR RNA (crRNA). Acts as a dsDNA endonuclease. Involved in the integration of spacer DNA into the CRISPR cassette. The chain is CRISPR-associated endonuclease Cas1 3 from Thermus thermophilus (strain ATCC 27634 / DSM 579 / HB8).